Reading from the N-terminus, the 358-residue chain is MFVDNVDIYVSSGKGGAGAVSFRREKYVIQGGPDGGDGGKGGDLYFEVNANTDTLSKFKGAKHYRAKNGQPGMGRRMSGKSGEEMVIVVPPGTQVFDYESNELLLDLKEEGMRVKFLEGGKGGLGNYHFKNSVNQRPTYAQPGIAGEERHVRLELKLIADVGLVGFPNVGKSTLISTLSNARPEVANYEFTTLIPALGVVDVDEFSSFVMADIPGIIGGASEGKGLGLEFLRHIERTKTLLFVIDLSNYREPLEQFEILQKELSQFSPELSLRPFGIALSKVDALSKEEANEKIELFLKGIGLSSCQSNQYALSEALQNYIAPLESSIPAFVVPISSATHENIKPLKYLLHESVRRRG.

In terms of domain architecture, Obg spans 1–158 (MFVDNVDIYV…RHVRLELKLI (158 aa)). An OBG-type G domain is found at 159–355 (ADVGLVGFPN…LKYLLHESVR (197 aa)). Residues 165–172 (GFPNVGKS), 190–194 (FTTLI), 212–215 (DIPG), 280–283 (SKVD), and 336–338 (SSA) each bind GTP. 2 residues coordinate Mg(2+): Ser172 and Thr192.

This sequence belongs to the TRAFAC class OBG-HflX-like GTPase superfamily. OBG GTPase family. Monomer. Mg(2+) is required as a cofactor.

It is found in the cytoplasm. In terms of biological role, an essential GTPase which binds GTP, GDP and possibly (p)ppGpp with moderate affinity, with high nucleotide exchange rates and a fairly low GTP hydrolysis rate. Plays a role in control of the cell cycle, stress response, ribosome biogenesis and in those bacteria that undergo differentiation, in morphogenesis control. This chain is GTPase Obg, found in Wolinella succinogenes (strain ATCC 29543 / DSM 1740 / CCUG 13145 / JCM 31913 / LMG 7466 / NCTC 11488 / FDC 602W) (Vibrio succinogenes).